The sequence spans 263 residues: 4-hydroxy-tetrahydrodipicolinate reductase (263 aa).

NAD(+) is bound by residues 8–13 (GASGRM), Asp-34, 99–101 (GTT), and 125–128 (SPNY). His-157 (proton donor/acceptor) is an active-site residue. A (S)-2,3,4,5-tetrahydrodipicolinate-binding site is contributed by His-158. The active-site Proton donor is the Lys-161. 167–168 (GT) contacts (S)-2,3,4,5-tetrahydrodipicolinate.

The protein belongs to the DapB family.

It localises to the cytoplasm. It carries out the reaction (S)-2,3,4,5-tetrahydrodipicolinate + NAD(+) + H2O = (2S,4S)-4-hydroxy-2,3,4,5-tetrahydrodipicolinate + NADH + H(+). The catalysed reaction is (S)-2,3,4,5-tetrahydrodipicolinate + NADP(+) + H2O = (2S,4S)-4-hydroxy-2,3,4,5-tetrahydrodipicolinate + NADPH + H(+). It functions in the pathway amino-acid biosynthesis; L-lysine biosynthesis via DAP pathway; (S)-tetrahydrodipicolinate from L-aspartate: step 4/4. In terms of biological role, catalyzes the conversion of 4-hydroxy-tetrahydrodipicolinate (HTPA) to tetrahydrodipicolinate. The sequence is that of 4-hydroxy-tetrahydrodipicolinate reductase from Methanococcoides burtonii (strain DSM 6242 / NBRC 107633 / OCM 468 / ACE-M).